The primary structure comprises 400 residues: Acetyl-CoA decarbonylase/synthase complex subunit delta (400 aa).

The protein belongs to the CdhD family. As to quaternary structure, heterodimer of delta and gamma chains. The ACDS complex is made up of alpha, epsilon, beta, gamma and delta chains with a probable stoichiometry of (alpha(2)epsilon(2))(4)-beta(8)-(gamma(1)delta(1))(8).

Part of a complex that catalyzes the reversible cleavage of acetyl-CoA, allowing autotrophic growth from CO(2). Probably maintains the overall quaternary structure of the ACDS complex. The protein is Acetyl-CoA decarbonylase/synthase complex subunit delta of Methanopyrus kandleri (strain AV19 / DSM 6324 / JCM 9639 / NBRC 100938).